The chain runs to 580 residues: Mucin-1 (580 aa).

An N-terminal signal peptide occupies residues 1-22 (MTPDIQAPFLSLLLLFPVLTVA). At 23-489 (NVPTLTTSDS…GSGVPGWGIA (467 aa)) the chain is on the extracellular side. The segment covering 28-37 (TTSDSINPRR) has biased composition (polar residues). The tract at residues 28-359 (TTSDSINPRR…SIALSTSSNP (332 aa)) is disordered. Over residues 38 to 88 (TTPVSTTQSSPTSSPTKETSWSTTTTLLTASSPAPSPAASPGHDGASTPTS) the composition is skewed to low complexity. 11 consecutive repeat copies span residues 70–89 (PAPSPAASPGHDGASTPTSS), 90–109 (PAPSPAASPGHDGASTPTSS), 110–129 (PAPSPAASPGHDGASTPTSS), 130–149 (PAPSPAASPGHDGASTPTSS), 150–169 (PAPSPAASPGHNGTSSPTGS), 170–189 (PAPSPAASPGHDGASTPTSS), 190–209 (PAPSPAASPGHNGTSSPTGS), 210–229 (PAPSPAASPGHDGASTPTSS), 230–249 (PAPSPAASPGHNGTSSPTGS), 250–269 (PAPSPTASPGHDSAPSLTSS), and 270–289 (PAPSPTASPGQHGASSPTSS). The interval 70–289 (PAPSPAASPG…QHGASSPTSS (220 aa)) is 11 X 20 AA approximate tandem repeats of P-A-P-S-P-A-A-S-P-G-H-D-G-A-S-T-P-T-S-S. O-linked (GalNAc...) serine glycosylation is found at serine 73, serine 77, and serine 84. Residues threonine 85 and threonine 87 are each glycosylated (O-linked (GalNAc...) threonine). O-linked (GalNAc...) serine glycosylation is found at serine 88 and serine 89. Composition is skewed to low complexity over residues 96 to 108 (ASPGHDGASTPTS), 116 to 128 (ASPGHDGASTPTS), 136 to 148 (ASPGHDGASTPTS), 156 to 168 (ASPGHNGTSSPTG), 176 to 188 (ASPGHDGASTPTS), 196 to 208 (ASPGHNGTSSPTG), 216 to 228 (ASPGHDGASTPTS), 236 to 248 (ASPGHNGTSSPTG), and 256 to 306 (ASPG…MVTS). N-linked (GlcNAc...) asparagine glycosylation occurs at asparagine 161. Asparagine 201 carries an N-linked (GlcNAc...) asparagine glycan. N-linked (GlcNAc...) asparagine glycosylation occurs at asparagine 241. The segment covering 308–344 (HKGTSSRATMTPVSKGTPSSVPSSETAPTAASHITRT) has biased composition (polar residues). Residues 345–357 (AASSPSIALSTSS) are compositionally biased toward low complexity. The 108-residue stretch at 368–475 (RVSLYFLSFR…VSVYSAPFPS (108 aa)) folds into the SEA domain. N-linked (GlcNAc...) asparagine glycans are attached at residues asparagine 384 and asparagine 460. Residues 490 to 510 (LLVLVCVLVALAIIYLIALVV) form a helical membrane-spanning segment. Residues cysteine 511 and cysteine 513 are each lipidated (S-palmitoyl cysteine). At 511–580 (CQCGRKKCEQ…TNLAATSANL (70 aa)) the chain is on the cytoplasmic side. The interaction with P53 stretch occupies residues 519 to 555 (EQLDVFPTLDAYHPMSEYSTYHTHGRYVPPGSTKRSP). The residue at position 530 (tyrosine 530) is a Phosphotyrosine; by PDGFR. Residues 530–533 (YHPM) carry the Interaction with GRB2 motif. Tyrosine 539 is subject to Phosphotyrosine. A disordered region spans residues 544–563 (RYVPPGSTKRSPYEEVSAGN). Tyrosine 545 is subject to Phosphotyrosine; by PDGFR. A required for interaction with GSK3B region spans residues 550–557 (STKRSPYE). A Phosphothreonine; by PKC/PRKCD modification is found at threonine 551. Serine 554 is modified (phosphoserine; by GSK3-beta). Phosphotyrosine; by CSK, EGFR and SRC is present on tyrosine 556. The Interaction with SRC and ESR1 signature appears at 556–559 (YEEV). The tract at residues 560–568 (SAGNGGSNL) is required for interaction with beta- and gamma-catenins. Tyrosine 570 bears the Phosphotyrosine mark. Positions 570–572 (YTN) match the Required for interaction with AP1S2 motif.

In terms of assembly, the alpha subunit forms a tight, non-covalent heterodimeric complex with the proteolytically-released beta subunit. Binds directly the SH2 domain of GRB2, and forms a MUC1/GRB2/SOS1 complex involved in RAS signaling. The cytoplasmic tail (MUC1CT) interacts with several proteins such as, SRC, CTNNB1 and ERBs. Interaction with the SH2 domain of CSK decreases interaction with GSK3B. Interacts with CTNNB1/beta-catenin and JUP/gamma-catenin and promotes cell adhesion. Interaction with JUP/gamma-catenin is induced by heregulin. Binds PRKCD, ERBB2, ERBB3 and ERBB4. Heregulin (HRG) stimulates the interaction with ERBB2 and, to a much lesser extent, the interaction with ERBB3 and ERBB4. Interacts with P53 in response to DNA damage. Interacts with KLF4. Interacts with estrogen receptor alpha/ESR1, through its DNA-binding domain, and stimulates its transcription activity. Binds ADAM17. In terms of processing, highly glycosylated (N- and O-linked carbohydrates and sialic acid). O-linked glycosylation consists mainly of GalNAc, galactose, and sialic acid. The ratio from pools of milk from different dairy breeds is GalNAc: GlcNAc:galactose:mannose:sialic acid is 14:1:10:1:15. Post-translationally, proteolytic cleavage in the SEA domain occurs in the endoplasmic reticulum by an autoproteolytic mechanism and requires the full-length SEA domain as well as requiring a Ser, Thr or Cys residue at the P + 1 site. Ectodomain shedding is mediated by ADAM17 in uterine epithelial cells. Dual palmitoylation on cysteine residues in the CQC motif is required for recycling from endosomes back to the plasma membrane. In terms of processing, phosphorylated on tyrosines and serine residues in the C-terminal. Phosphorylation on tyrosines in the C-terminal increases the nuclear location of MUC1 and beta-catenin. Phosphorylation by PKC delta induces binding of MUC1 to beta-catenin/CTNNB1 and thus decreases the formation of the beta-catenin/E-cadherin complex. Src-mediated phosphorylation inhibits interaction with GSK3B. Csk- or Src- or EGFR-mediated phosphorylation on Tyr-556 increases binding to beta-catenin/CTNNB1. GSK3B-mediated phosphorylation on Ser-554 decreases this interaction but restores the formation of the beta-cadherin/E-cadherin complex. On T-cell receptor activation, phosphorylated by LCK. PDGFR-mediated phosphorylation increases nuclear colocalization of MUC1CT and CTNNB1. Expressed on the apical surface of epithelia cells, and on the milk fat globule membrane (MGGM).

Its subcellular location is the apical cell membrane. It is found in the cell membrane. The protein localises to the cytoplasm. The protein resides in the nucleus. Functionally, the alpha subunit has cell adhesive properties. May provide a protective layer on epithelial cells against bacterial and enzyme attack. In terms of biological role, the beta subunit contains a C-terminal domain which is involved in cell signaling, through phosphorylations and protein-protein interactions. Modulates signaling in ERK, Src and NF-kappa-B pathways. In activated T-cells, influences directly or indirectly the Ras/MAPK pathway. Promotes tumor progression. Regulates P53-mediated transcription and determines cell fate in the genotoxic stress response. Binds, together with KLF4, the PE21 promoter element of P53 and represses P53 activity. The protein is Mucin-1 (MUC1) of Bos taurus (Bovine).